Here is a 103-residue protein sequence, read N- to C-terminus: Pyrimidine/purine nucleoside phosphorylase (103 aa).

It belongs to the nucleoside phosphorylase PpnP family.

The catalysed reaction is a purine D-ribonucleoside + phosphate = a purine nucleobase + alpha-D-ribose 1-phosphate. It carries out the reaction adenosine + phosphate = alpha-D-ribose 1-phosphate + adenine. It catalyses the reaction cytidine + phosphate = cytosine + alpha-D-ribose 1-phosphate. The enzyme catalyses guanosine + phosphate = alpha-D-ribose 1-phosphate + guanine. The catalysed reaction is inosine + phosphate = alpha-D-ribose 1-phosphate + hypoxanthine. It carries out the reaction thymidine + phosphate = 2-deoxy-alpha-D-ribose 1-phosphate + thymine. It catalyses the reaction uridine + phosphate = alpha-D-ribose 1-phosphate + uracil. The enzyme catalyses xanthosine + phosphate = alpha-D-ribose 1-phosphate + xanthine. In terms of biological role, catalyzes the phosphorolysis of diverse nucleosides, yielding D-ribose 1-phosphate and the respective free bases. Can use uridine, adenosine, guanosine, cytidine, thymidine, inosine and xanthosine as substrates. Also catalyzes the reverse reactions. In Shewanella oneidensis (strain ATCC 700550 / JCM 31522 / CIP 106686 / LMG 19005 / NCIMB 14063 / MR-1), this protein is Pyrimidine/purine nucleoside phosphorylase.